A 1327-amino-acid polypeptide reads, in one-letter code: Putative ATP-dependent RNA helicase ucp12 (1327 aa).

Disordered stretches follow at residues 1–58 (MGSK…KQLV) and 201–222 (QAAR…NEKV). Over residues 18 to 41 (SKNKEKNIKGKKKNSLDPIEKNKQ) the composition is skewed to basic and acidic residues. A compositionally biased stretch (polar residues) spans 42 to 58 (ETAGLQTTSRPTAKQLV). In terms of domain architecture, UBA spans 276 to 315 (EPDTSIVNDLISLGFRDIHAKEACQYCVSLEDALEWLIIH). The region spanning 405 to 504 (DDVSALQSIL…NHLQENIEDF (100 aa)) is the RWD domain. Residues 587–756 (MDAIQHSQVV…FGNAGHLHIH (170 aa)) enclose the Helicase ATP-binding domain. 600-607 (GETGSGKS) lines the ATP pocket. A DEAH box motif is present at residues 703–706 (DEVH). Positions 797 to 968 (LISRLVSSID…QVCLNVVPLV (172 aa)) constitute a Helicase C-terminal domain.

This sequence belongs to the DEAD box helicase family. DEAH subfamily.

Its subcellular location is the cytoplasm. The catalysed reaction is ATP + H2O = ADP + phosphate + H(+). Functionally, probable ATP-binding RNA helicase. This is Putative ATP-dependent RNA helicase ucp12 (ucp12) from Schizosaccharomyces pombe (strain 972 / ATCC 24843) (Fission yeast).